Reading from the N-terminus, the 423-residue chain is MVELRQFSDLPIALSGISRIADPSPPPPVVAIRRRFKGGGNTRRIVFSVPLIFAFPFPTGTPKDVLVGIAAVFDGHSGSEASEMASQLLLDYFALHIYFLLDATFSKELTGKLPNSLMHLYDLDSQRFQDSLPLNFHLDILKEALLRAIYDIDATFTKEASTRKLDSGSTATIALIADGQLLVASIGDSKALLCSERYETPEEAKATLIKLYRERKRNQDSSPSRFSDLKLEHRTGLMRFIAKELTKDHHPDREDEMLRVKAAGGYVTKWAGVPRVNGQLAVSRSIGDLTYRSYGVISAPEVMDWQPLVANDSYLVVSSDGIFEKLEVQDACDRLWEVKNQTSFGAGVPSYCSISLADCLVNTAFEKGSMDNMAAVVVPLKSNLDWESQPKEQSVGPSGFKMKNTYALPCEFLSSQPNLFRMG.

One can recognise a PPM-type phosphatase domain in the interval 52-380 (IFAFPFPTGT…DNMAAVVVPL (329 aa)). Residues Asp74, Gly75, Asp320, and Asp371 each coordinate Mn(2+).

Belongs to the PP2C family. Mg(2+) is required as a cofactor. The cofactor is Mn(2+).

It carries out the reaction O-phospho-L-seryl-[protein] + H2O = L-seryl-[protein] + phosphate. The catalysed reaction is O-phospho-L-threonyl-[protein] + H2O = L-threonyl-[protein] + phosphate. This Arabidopsis thaliana (Mouse-ear cress) protein is Putative protein phosphatase 2C 50.